The sequence spans 462 residues: Argininosuccinate lyase (462 aa).

Belongs to the lyase 1 family. Argininosuccinate lyase subfamily.

Its subcellular location is the cytoplasm. The enzyme catalyses 2-(N(omega)-L-arginino)succinate = fumarate + L-arginine. It functions in the pathway amino-acid biosynthesis; L-arginine biosynthesis; L-arginine from L-ornithine and carbamoyl phosphate: step 3/3. In Exiguobacterium sp. (strain ATCC BAA-1283 / AT1b), this protein is Argininosuccinate lyase.